A 306-amino-acid chain; its full sequence is Oxygen-dependent coproporphyrinogen-III oxidase (306 aa).

S99 contributes to the substrate binding site. Residues H103 and H113 each contribute to the a divalent metal cation site. Catalysis depends on H113, which acts as the Proton donor. 115-117 (NVR) serves as a coordination point for substrate. A divalent metal cation contacts are provided by H152 and H182. The tract at residues 247–282 (YVEFNLVFDRGTLFGLQSGGRTESILMSMPPVANWR) is important for dimerization. 265–267 (GGR) contacts substrate.

This sequence belongs to the aerobic coproporphyrinogen-III oxidase family. In terms of assembly, homodimer. A divalent metal cation serves as cofactor.

It localises to the cytoplasm. The enzyme catalyses coproporphyrinogen III + O2 + 2 H(+) = protoporphyrinogen IX + 2 CO2 + 2 H2O. It functions in the pathway porphyrin-containing compound metabolism; protoporphyrin-IX biosynthesis; protoporphyrinogen-IX from coproporphyrinogen-III (O2 route): step 1/1. Involved in the heme biosynthesis. Catalyzes the aerobic oxidative decarboxylation of propionate groups of rings A and B of coproporphyrinogen-III to yield the vinyl groups in protoporphyrinogen-IX. This Burkholderia ambifaria (strain MC40-6) protein is Oxygen-dependent coproporphyrinogen-III oxidase.